The primary structure comprises 483 residues: Altronate oxidoreductase (483 aa).

18-29 contributes to the NAD(+) binding site; sequence IIQFGEGNFLRA.

This sequence belongs to the mannitol dehydrogenase family. UxaB subfamily.

It carries out the reaction D-altronate + NAD(+) = keto-D-tagaturonate + NADH + H(+). It functions in the pathway carbohydrate metabolism; pentose and glucuronate interconversion. The chain is Altronate oxidoreductase from Escherichia coli O17:K52:H18 (strain UMN026 / ExPEC).